The sequence spans 95 residues: UPF0235 protein MS0322 (95 aa).

The protein belongs to the UPF0235 family.

This is UPF0235 protein MS0322 from Mannheimia succiniciproducens (strain KCTC 0769BP / MBEL55E).